The chain runs to 160 residues: Transcription antitermination protein NusB (160 aa).

Belongs to the NusB family.

Functionally, involved in transcription antitermination. Required for transcription of ribosomal RNA (rRNA) genes. Binds specifically to the boxA antiterminator sequence of the ribosomal RNA (rrn) operons. This is Transcription antitermination protein NusB from Salinibacter ruber (strain DSM 13855 / M31).